The following is a 241-amino-acid chain: Folate receptor alpha (241 aa).

The first 19 residues, 1–19 (MAWQMTQLLLLALVAAAWG), serve as a signal peptide directing secretion. 8 cysteine pairs are disulfide-bonded: C36–C64, C56–C104, C65–C108, C88–C174, C95–C145, C134–C208, C138–C188, and C151–C168. Residue N68 is glycosylated (N-linked (GlcNAc...) asparagine). Folate contacts are provided by residues D102, Y106, 123–127 (WRKER), 156–161 (HKGWNW), and S195. N160 carries N-linked (GlcNAc...) asparagine glycosylation. A lipid anchor (GPI-anchor amidated serine) is attached at S234. A propeptide spans 235-241 (GSTPQGI) (removed in mature form).

This sequence belongs to the folate receptor family. The secreted form is derived from the membrane-bound form either by cleavage of the GPI anchor, or/and by proteolysis catalyzed by a metalloprotease. As to expression, detected in milk (at protein level).

It localises to the cell membrane. The protein resides in the apical cell membrane. The protein localises to the basolateral cell membrane. Its subcellular location is the secreted. It is found in the cytoplasmic vesicle. It localises to the clathrin-coated vesicle. The protein resides in the endosome. Its function is as follows. Binds to folate and reduced folic acid derivatives and mediates delivery of 5-methyltetrahydrofolate and folate analogs into the interior of cells. Has high affinity for folate and folic acid analogs at neutral pH. Exposure to slightly acidic pH after receptor endocytosis triggers a conformation change that strongly reduces its affinity for folates and mediates their release. Required for normal embryonic development and normal cell proliferation. The protein is Folate receptor alpha (FOLR1) of Bos taurus (Bovine).